The chain runs to 72 residues: Sec-independent protein translocase protein TatA (72 aa).

The helical transmembrane segment at 1–21 threads the bilayer; that stretch reads MGSFSIWHWLIVLAVVLLLFG. The segment at 43–72 is disordered; it reads MADEDAKEDPRTIDAKAEEPVKDVKKTTKS. A compositionally biased stretch (basic and acidic residues) spans 50–72; it reads EDPRTIDAKAEEPVKDVKKTTKS.

It belongs to the TatA/E family. The Tat system comprises two distinct complexes: a TatABC complex, containing multiple copies of TatA, TatB and TatC subunits, and a separate TatA complex, containing only TatA subunits. Substrates initially bind to the TatABC complex, which probably triggers association of the separate TatA complex to form the active translocon.

It localises to the cell inner membrane. Its function is as follows. Part of the twin-arginine translocation (Tat) system that transports large folded proteins containing a characteristic twin-arginine motif in their signal peptide across membranes. TatA could form the protein-conducting channel of the Tat system. This chain is Sec-independent protein translocase protein TatA, found in Brucella suis biovar 1 (strain 1330).